Consider the following 73-residue polypeptide: Large ribosomal subunit protein bL31 (73 aa).

It belongs to the bacterial ribosomal protein bL31 family. Type A subfamily. Part of the 50S ribosomal subunit. Contacts protein L9.

Binds the 23S rRNA and interacts with the tRNA in the E site. This chain is Large ribosomal subunit protein bL31 (rpmE), found in Deinococcus radiodurans (strain ATCC 13939 / DSM 20539 / JCM 16871 / CCUG 27074 / LMG 4051 / NBRC 15346 / NCIMB 9279 / VKM B-1422 / R1).